Consider the following 1378-residue polypeptide: MNIGDDKSEVDVIIDSSSITLNNNESSNNNTNIGDVLKFESGLYNSFECELINQVFNSVPIMMGVCDLYDNSNSDFQIQDSQNYDFKFVISNRCSYDNLHMFLDKGKGLDGHYSAKELHLPAYFITLWIENMLRSLRKKKSVKFMYPRYVDNGETPSSDDFYSQKIVWKKSTMCFMGQVLVPLDDINSNSNNNSNQKQTACRFFFTSEEVTKEKFKKEELINDFKSRLETLENKIDQRVDERIETRFKYVLESIPQMVWVTDNHGKIEFVNRQWKDYLGIDHSGQYLNWGSISYQQHNNNNNNNNNNNNNNNNNNNNNSNNKSPIINSPNTTSPTNTQIDFDSQWHYSLKEMKRFEMEILLQSMSGEYRWFLVRAEPYIEPNLGHPSSPLPSIISACVDNCDIMTDDNSSGILINNNNNIQQPYLNNDNISGDNVNNTPTCIDNNNNNIDGSNNSVNSTGTEQLDIKWIGTCTDVNDQKTAQDRIENAEKSKALFLQTMSHEMRTPLAGIMGINSWLSTSSPQLTSEQLDGCHTIDMCAEALLVLINNILDLSKLEENKIILEETEFYPTKIVEDSVDILSSQAEQKKLDIIFQLKYNCLSKVVGDFYRIRQVLTNLISNSVKFTPANGQIIVGCEIYHETTPSTRKRSSLDSIEITIPCNHNNSNNSNNNHNHNNNNNNNNHLNCSGSFNNNGFNHGHHHHHHHHHHHHHHHDKHCDQKIIVPGKYGKLLFWVIDNGIGIPEEGREKLFQTFSQYDASTTRKYGGSGLGLAISKRLTQLLGGDIWFESQKGKGSSFHFLVEVFFPDYPTIYNQQLQQQQQQPNLPHQFNIGTSAPQPIDSILTSYSSNNSNNNINNNNITTSVISQSPIVDKSNLCTYIFLLSTNQVLVNSLSQWINEWIGNATNNNNSNNDNNNNNTTSTTTTTTTTTATINTNINQQVKILYDIDSIEQISNSAIQSGKRLDFLFLIEDTFWNNYSDKISNSQEIIESLINQNYQQQQQQQQEQRQQHNIKNVILSFSNSAQIYGNSIILKKPIKYSPLKDCIYTNLLYFKSIYSVNSFDVIIATQMSSSVSPSSLSSSPSIQGLTNSSLSINNINISGNNSNNNINNNNNNSGSSTPKKLKKSNSDQSIHFSPSLTSSSLPSLDLNNNNNINNNNNINNNNNINNNNNNNNNNNNNNNNNNNNLNHYNSDSILSSDLSPQQHQYHHPNPLLANYQKKRRNSVVNDTDIPLEMTGIRYPLKIMVAEDSLVNQKVACRFLTKLGYKKEEIIFVVNGQQAIDHIENVEMVDVILMDMQMPEVDGCEATTRIRMRYPTTGPHIIGLTANAFNEDKDKCLLSGMCHYLAKPVKMDILAVELKRAWLIRNKFRVCLCAVL.

Residues 212 to 242 adopt a coiled-coil conformation; that stretch reads KEKFKKEELINDFKSRLETLENKIDQRVDER. One can recognise a PAS domain in the interval 243-314; sequence IETRFKYVLE…NNNNNNNNNN (72 aa). Residues 294–337 form a disordered region; it reads YQQHNNNNNNNNNNNNNNNNNNNNNSNNKSPIINSPNTTSPTNT. A compositionally biased stretch (low complexity) spans 298–337; that stretch reads NNNNNNNNNNNNNNNNNNNNNSNNKSPIINSPNTTSPTNT. One can recognise a Histidine kinase domain in the interval 498–805; sequence TMSHEMRTPL…SFHFLVEVFF (308 aa). Phosphohistidine; by autocatalysis is present on His501. Residues 663-696 show a composition bias toward low complexity; it reads NNSNNSNNNHNHNNNNNNNNHLNCSGSFNNNGFN. 3 disordered regions span residues 663-717, 905-924, and 1103-1213; these read NNSN…DKHC, TNNNNSNNDNNNNNTTSTTT, and NNSN…HPNP. A compositionally biased stretch (basic residues) spans 697–714; that stretch reads HGHHHHHHHHHHHHHHHD. Low complexity-rich tracts occupy residues 1103 to 1119 and 1136 to 1187; these read NNSNNNINNNNNNSGSS and SPSL…NNNN. Over residues 1188 to 1206 the composition is skewed to polar residues; the sequence is LNHYNSDSILSSDLSPQQH. The region spanning 1244–1364 is the Response regulatory domain; the sequence is KIMVAEDSLV…ILAVELKRAW (121 aa). Asp1297 bears the 4-aspartylphosphate mark.

Activation probably requires transfer of a phosphate group between a histidine in the kinase core (transmitter) domain and an aspartate of the receiver domain.

It carries out the reaction ATP + protein L-histidine = ADP + protein N-phospho-L-histidine.. In terms of biological role, acts as a receptor histidine kinase for a signal transduction pathway. This protein undergoes an ATP-dependent autophosphorylation at a conserved histidine residue in the kinase core, and a phosphoryl group is then transferred to a conserved aspartate residue in the receiver domain. The protein is Hybrid signal transduction histidine kinase H (dhkH) of Dictyostelium discoideum (Social amoeba).